We begin with the raw amino-acid sequence, 421 residues long: 3-phosphoshikimate 1-carboxyvinyltransferase (421 aa).

Lysine 21, serine 22, and arginine 26 together coordinate 3-phosphoshikimate. A phosphoenolpyruvate-binding site is contributed by lysine 21. Glycine 93 and arginine 121 together coordinate phosphoenolpyruvate. 3-phosphoshikimate-binding residues include serine 166, serine 167, glutamine 168, serine 194, aspartate 310, and lysine 337. Phosphoenolpyruvate is bound at residue glutamine 168. Aspartate 310 serves as the catalytic Proton acceptor. Residues arginine 341, arginine 382, and lysine 407 each coordinate phosphoenolpyruvate.

It belongs to the EPSP synthase family. Monomer.

The protein resides in the cytoplasm. It carries out the reaction 3-phosphoshikimate + phosphoenolpyruvate = 5-O-(1-carboxyvinyl)-3-phosphoshikimate + phosphate. Its pathway is metabolic intermediate biosynthesis; chorismate biosynthesis. Functionally, catalyzes the transfer of the enolpyruvyl moiety of phosphoenolpyruvate (PEP) to the 5-hydroxyl of shikimate-3-phosphate (S3P) to produce enolpyruvyl shikimate-3-phosphate and inorganic phosphate. The polypeptide is 3-phosphoshikimate 1-carboxyvinyltransferase (Methanoregula boonei (strain DSM 21154 / JCM 14090 / 6A8)).